The primary structure comprises 536 residues: Phosphoenolpyruvate carboxykinase (ATP) (536 aa).

3 residues coordinate substrate: Arg63, Tyr203, and Lys209. Residues Lys209, His228, and 244–252 (GLSGTGKTT) contribute to the ATP site. The Mn(2+) site is built by Lys209 and His228. Asp265 lines the Mn(2+) pocket. ATP-binding positions include Glu293, Arg329, 445–446 (RI), and Thr451. Substrate is bound at residue Arg329.

This sequence belongs to the phosphoenolpyruvate carboxykinase (ATP) family. As to quaternary structure, monomer. It depends on Mn(2+) as a cofactor.

The protein resides in the cytoplasm. It carries out the reaction oxaloacetate + ATP = phosphoenolpyruvate + ADP + CO2. Its pathway is carbohydrate biosynthesis; gluconeogenesis. Its function is as follows. Involved in the gluconeogenesis. Catalyzes the conversion of oxaloacetate (OAA) to phosphoenolpyruvate (PEP) through direct phosphoryl transfer between the nucleoside triphosphate and OAA. This chain is Phosphoenolpyruvate carboxykinase (ATP), found in Colwellia psychrerythraea (strain 34H / ATCC BAA-681) (Vibrio psychroerythus).